The chain runs to 229 residues: uncharacterized protein (229 aa).

The tract at residues 61–229 is disordered; that stretch reads MQAEDKVSKP…TESEDKPKRG (169 aa). The span at 109-128 shows a compositional bias: basic and acidic residues; it reads QQEKQQPEKAVVEQQEKQQP. The span at 166-194 shows a compositional bias: low complexity; the sequence is QPEQPERQQQAQPERQQQAQPERQQQAQP. A compositionally biased stretch (acidic residues) spans 195-204; that stretch reads EEAEDAEQEP. The segment covering 218-229 has biased composition (basic and acidic residues); the sequence is TQTESEDKPKRG.

This is an uncharacterized protein from Frog virus 3 (isolate Goorha) (FV-3).